Here is a 256-residue protein sequence, read N- to C-terminus: Acetylglutamate kinase (256 aa).

Substrate is bound by residues 40–41 (GG), Arg62, and Asn154.

Belongs to the acetylglutamate kinase family. ArgB subfamily.

The protein localises to the cytoplasm. The enzyme catalyses N-acetyl-L-glutamate + ATP = N-acetyl-L-glutamyl 5-phosphate + ADP. It functions in the pathway amino-acid biosynthesis; L-arginine biosynthesis; N(2)-acetyl-L-ornithine from L-glutamate: step 2/4. Its function is as follows. Catalyzes the ATP-dependent phosphorylation of N-acetyl-L-glutamate. In Staphylococcus aureus (strain bovine RF122 / ET3-1), this protein is Acetylglutamate kinase.